The chain runs to 302 residues: MSLSGIITALATPFGPDGALDLDAWRRLLEQQLHGGVQGLVVAGSTGEAAALSDDEYDTLLRAAAAQVAGRVPVLAGTGLSGTAKTIAQTRRAAALGAQYALVVTPPYVRPTQAGLKAHFLAVADEGGLPVVLYNVPGRTGCDLLPETVAELVGHPNIVGIKEARSEPERVAALVALRSDSFVVLSGDDGSAAHAMLSGAAGLISVASNALPAAYRRLCDLARDGQRDAAAAWDARLSEYHNFCGIESNPIPVKALLQRAGIGHGLRLPLLPLSAAHQPAADRLAADAIALEALSSREMLAA.

Residue T46 participates in pyruvate binding. The active-site Proton donor/acceptor is Y134. K162 (schiff-base intermediate with substrate) is an active-site residue. I204 contributes to the pyruvate binding site.

This sequence belongs to the DapA family. In terms of assembly, homotetramer; dimer of dimers.

The protein localises to the cytoplasm. The catalysed reaction is L-aspartate 4-semialdehyde + pyruvate = (2S,4S)-4-hydroxy-2,3,4,5-tetrahydrodipicolinate + H2O + H(+). The protein operates within amino-acid biosynthesis; L-lysine biosynthesis via DAP pathway; (S)-tetrahydrodipicolinate from L-aspartate: step 3/4. In terms of biological role, catalyzes the condensation of (S)-aspartate-beta-semialdehyde [(S)-ASA] and pyruvate to 4-hydroxy-tetrahydrodipicolinate (HTPA). The chain is 4-hydroxy-tetrahydrodipicolinate synthase from Xanthomonas axonopodis pv. citri (strain 306).